We begin with the raw amino-acid sequence, 590 residues long: Glutamine--tRNA ligase (590 aa).

Positions 55–65 (PEPNGYLHIGH) match the 'HIGH' region motif. Residues 56-58 (EPN) and 62-68 (HIGHAKS) each bind ATP. Residues Asp93 and Tyr238 each contribute to the L-glutamine site. ATP-binding positions include Thr257 and 292–293 (RL). The 'KMSKS' region motif lies at 299–303 (ITSKR).

Belongs to the class-I aminoacyl-tRNA synthetase family. In terms of assembly, monomer.

The protein localises to the cytoplasm. It catalyses the reaction tRNA(Gln) + L-glutamine + ATP = L-glutaminyl-tRNA(Gln) + AMP + diphosphate. The sequence is that of Glutamine--tRNA ligase from Polynucleobacter necessarius subsp. necessarius (strain STIR1).